The following is a 213-amino-acid chain: Nicotinamidase (213 aa).

Catalysis depends on Asp10, which acts as the Proton acceptor. Residues Asp52, His54, and His86 each coordinate Zn(2+). Lys111 is an active-site residue. The active-site Nucleophile is Cys156.

This sequence belongs to the isochorismatase family.

The catalysed reaction is nicotinamide + H2O = nicotinate + NH4(+). It catalyses the reaction pyrazinamide + H2O = pyrazine-2-carboxylate + NH4(+). The protein operates within cofactor biosynthesis; nicotinate biosynthesis; nicotinate from nicotinamide: step 1/1. In terms of biological role, catalyzes the deamidation of nicotinamide (NAM) into nicotinate. Likely functions in the cyclical salvage pathway for production of NAD from nicotinamide. Its function is as follows. Is also able to hydrolyze the first-line antituberculous drug pyrazinamide (PZA) into pyrazinoic acid in vitro, but this reaction is not considered to be physiologically relevant. The sequence is that of Nicotinamidase from Escherichia coli (strain K12).